The chain runs to 83 residues: Arminin 4364 (83 aa).

Positions 1-18 (MKTVFAILFLAFIALTYA) are cleaved as a signal peptide. A propeptide spanning residues 19–55 (RSYEDVKEEIKNEVEKEILEDLEKETDELNERKINDA) is cleaved from the precursor. Val-80 carries the valine amide modification.

Belongs to the arminin family. In terms of tissue distribution, expressed in entodermal epithelium along the body column.

It is found in the secreted. The protein resides in the target cell membrane. In terms of biological role, antimicrobial peptide with a broad-spectrum antimicrobial activity. Keeps its antibacterial activity under a wide range of salt concentrations that mimic physiological conditions of human blood, which is surprising, since Hydra is an obligate freshwater animal with nearly no salt tolerance. Does not affect red blood cells. In Hydra vulgaris (Hydra), this protein is Arminin 4364.